Here is a 25-residue protein sequence, read N- to C-terminus: SKTPIRVAVTGAAGNIGYHLLFRIA.

Residue 11-17 (GAAGNIG) participates in NAD(+) binding.

Belongs to the LDH/MDH superfamily. MDH type 2 family.

The enzyme catalyses (S)-malate + NAD(+) = oxaloacetate + NADH + H(+). Its function is as follows. Catalyzes the reversible oxidation of malate to oxaloacetate. The sequence is that of Malate dehydrogenase (mdh) from Phenylobacterium immobile.